The chain runs to 2460 residues: Reducing polyketide synthase BOA6 (2460 aa).

The region spanning 5–438 (NEPIAVIGTG…GTNAHAILES (434 aa)) is the Ketosynthase family 3 (KS3) domain. Catalysis depends on for beta-ketoacyl synthase activity residues C178, H317, and H360. A malonyl-CoA:ACP transacylase (MAT) domain region spans residues 549–864 (VFTGQGAQWP…PYTGVLSRGD (316 aa)). The tract at residues 938 to 1073 (HELLGVRCAD…GRIKMTLGTP (136 aa)) is N-terminal hotdog fold. Residues 938–1244 (HELLGVRCAD…QMQSFTAARP (307 aa)) are dehydratase (DH) domain. Residues 938-1245 (HELLGVRCAD…MQSFTAARPS (308 aa)) enclose the PKS/mFAS DH domain. H970 (proton acceptor; for dehydratase activity) is an active-site residue. The tract at residues 1088–1245 (LGPLNVDRFY…MQSFTAARPS (158 aa)) is C-terminal hotdog fold. D1145 acts as the Proton donor; for dehydratase activity in catalysis. The interval 1399-1586 (NKFVTAAMKK…VNDFKDKSRY (188 aa)) is methyltransferase (MT) domain. The tract at residues 2098 to 2266 (SYLLAGLTGD…KRGGVASVIH (169 aa)) is ketoreductase (KR) domain. The Carrier domain maps to 2378 to 2456 (DEVLGVMQKC…DLCELACEEY (79 aa)). O-(pantetheine 4'-phosphoryl)serine is present on S2416.

Its pathway is polyketide biosynthesis. Reducing polyketide synthase; part of the gene cluster A that mediates the biosynthesis of botcinic acid and its botcinin derivatives, acetate-derived polyketides that contribute to virulence when combined with the sesquiterpene botrydial. Botcinic acid and its derivatives have been shown to induce chlorosis and necrosis during host plant infection, but also have antifungal activities. Two polyketide synthases, BOA6 and BOA9, are involved in the biosynthesis of botcinins. BOA6 mediates the formation of the per-methylated tetraketide core by condensation of four units of malonyl-CoA with one unit of acetyl-CoA, which would be methylated in activated methylene groups to yield a bicyclic acid intermediate that could then either be converted to botrylactone derivatives or lose the starter acetate unit through a retro-Claisen type C-C bond cleavage to yield botcinin derivatives. The second polyketide synthase, BOA9, is probably required for the biosynthesis of the tetraketide side chain of botcinins. The methyltransferase (MT) domain within BOA6 is probably responsible for the incorporation of four methyl groups. The trans-enoyl reductase BOA5 might take over the enoyl reductase function of BOA6 that misses an ER domain. The monooxygenases BOA2, BOA3 and BOA4 might be involved in further hydroxylations at C4, C5 and C8, whereas BOA7, close to BOA9, could potentially be involved in the hydroxylation at C4 in the side chain of botcinins. This chain is Reducing polyketide synthase BOA6, found in Botryotinia fuckeliana (strain B05.10) (Noble rot fungus).